Reading from the N-terminus, the 208-residue chain is Glycerol-3-phosphate acyltransferase (208 aa).

The next 5 helical transmembrane spans lie at 3-23, 55-75, 81-101, 113-133, and 155-175; these read IIIM…VIIG, IVMV…TLLF, YTLL…YIGF, ILLA…LLLV, and IFYY…LFIF.

This sequence belongs to the PlsY family. In terms of assembly, probably interacts with PlsX.

The protein resides in the cell membrane. It catalyses the reaction an acyl phosphate + sn-glycerol 3-phosphate = a 1-acyl-sn-glycero-3-phosphate + phosphate. Its pathway is lipid metabolism; phospholipid metabolism. Its function is as follows. Catalyzes the transfer of an acyl group from acyl-phosphate (acyl-PO(4)) to glycerol-3-phosphate (G3P) to form lysophosphatidic acid (LPA). This enzyme utilizes acyl-phosphate as fatty acyl donor, but not acyl-CoA or acyl-ACP. The sequence is that of Glycerol-3-phosphate acyltransferase from Lactiplantibacillus plantarum (strain ATCC BAA-793 / NCIMB 8826 / WCFS1) (Lactobacillus plantarum).